The following is a 236-amino-acid chain: uncharacterized protein (236 aa).

The HTH gntR-type domain maps to 7 to 74; that stretch reads RTNRRDIYLK…PKIGSFVSRV (68 aa). A DNA-binding region (H-T-H motif) is located at residues 34–53; that stretch reads ENELAASMGVSRTPVRESLI.

This is an uncharacterized protein from Streptomyces ambofaciens.